Consider the following 467-residue polypeptide: Peptidoglycan-N-acetylmuramic acid deacetylase PdaC (467 aa).

The helical transmembrane segment at 6–26 (IKWFHVLIAVVCVVGLIGFFH) threads the bilayer. The region spanning 278 to 452 (KVIALTFDDG…KLTDQGYQLV (175 aa)) is the NodB homology domain. Asp-285 functions as the Proton acceptor in the catalytic mechanism. Residues Asp-286, His-336, and His-340 each coordinate a divalent metal cation. His-427 acts as the Proton donor in catalysis.

This sequence in the N-terminal section; belongs to the RsiV family. In the C-terminal section; belongs to the polysaccharide deacetylase family.

The protein localises to the cell membrane. Its activity is regulated as follows. Activated by divalent metal cations; Mn(2+) is the most efficient, followed by Ca(2+) and Mg(2+). In contrast to PgdA from S.pneumoniae, these ions are not absolutely required for deacetylase activity. Catalyzes the deacetylation of N-acetylmuramic acid (MurNAc) residues in peptidoglycan, a modification that confers resistance to lysosyme. Is not able to deacetylate N-acetylglucosamine (GlcNAc) residues in peptidoglycan, but can deacylate chitin oligomers such as GlcNAc4 and GlcNAc5. Is essentially not active toward chitosan (partially deacetylated GlcNAc polymer) and has very low activity toward chitin (GlcNAc polymer). Does not deacetylate GlcNAc. The protein is Peptidoglycan-N-acetylmuramic acid deacetylase PdaC (pdaC) of Bacillus subtilis (strain 168).